Here is a 258-residue protein sequence, read N- to C-terminus: GTP cyclohydrolase FolE2 (258 aa).

This sequence belongs to the GTP cyclohydrolase IV family.

It catalyses the reaction GTP + H2O = 7,8-dihydroneopterin 3'-triphosphate + formate + H(+). Its pathway is cofactor biosynthesis; 7,8-dihydroneopterin triphosphate biosynthesis; 7,8-dihydroneopterin triphosphate from GTP: step 1/1. Its function is as follows. Converts GTP to 7,8-dihydroneopterin triphosphate. In Pseudothermotoga lettingae (strain ATCC BAA-301 / DSM 14385 / NBRC 107922 / TMO) (Thermotoga lettingae), this protein is GTP cyclohydrolase FolE2.